The chain runs to 873 residues: DNA mismatch repair protein MutS (873 aa).

Residue 625 to 632 (GPNMGGKS) coordinates ATP.

Belongs to the DNA mismatch repair MutS family.

Its function is as follows. This protein is involved in the repair of mismatches in DNA. It is possible that it carries out the mismatch recognition step. This protein has a weak ATPase activity. In Xanthomonas oryzae pv. oryzae (strain KACC10331 / KXO85), this protein is DNA mismatch repair protein MutS.